The chain runs to 296 residues: tRNA U34 carboxymethyltransferase (296 aa).

Carboxy-S-adenosyl-L-methionine is bound by residues Lys64, Trp78, Lys83, Gly102, 124–126, 151–152, Tyr171, and Arg286; these read DPS and VE.

This sequence belongs to the class I-like SAM-binding methyltransferase superfamily. CmoB family. Homotetramer.

It catalyses the reaction carboxy-S-adenosyl-L-methionine + 5-hydroxyuridine(34) in tRNA = 5-carboxymethoxyuridine(34) in tRNA + S-adenosyl-L-homocysteine + H(+). In terms of biological role, catalyzes carboxymethyl transfer from carboxy-S-adenosyl-L-methionine (Cx-SAM) to 5-hydroxyuridine (ho5U) to form 5-carboxymethoxyuridine (cmo5U) at position 34 in tRNAs. The polypeptide is tRNA U34 carboxymethyltransferase (Sulfurimonas denitrificans (strain ATCC 33889 / DSM 1251) (Thiomicrospira denitrificans (strain ATCC 33889 / DSM 1251))).